Here is a 663-residue protein sequence, read N- to C-terminus: UvrABC system protein B (663 aa).

The segment covering 1–10 (MIDKRDDKPF) has biased composition (basic and acidic residues). A disordered region spans residues 1 to 23 (MIDKRDDKPFKLKSKYKPSGDQP). Residues 31–418 (DNIEGGEKAQ…TNTIIEQIIR (388 aa)) enclose the Helicase ATP-binding domain. 44–51 (GATGTGKT) serves as a coordination point for ATP. A Beta-hairpin motif is present at residues 97 to 120 (YYDYYQPEAYVPSSDTYIEKDSSV). Residues 435 to 601 (QMDDLLGEIN…TIKKDIRGLI (167 aa)) enclose the Helicase C-terminal domain. One can recognise a UVR domain in the interval 627-662 (KEAINALQKQMQEAAELLDFELAAQMRDLILELKLM).

This sequence belongs to the UvrB family. As to quaternary structure, forms a heterotetramer with UvrA during the search for lesions. Interacts with UvrC in an incision complex.

It localises to the cytoplasm. Its function is as follows. The UvrABC repair system catalyzes the recognition and processing of DNA lesions. A damage recognition complex composed of 2 UvrA and 2 UvrB subunits scans DNA for abnormalities. Upon binding of the UvrA(2)B(2) complex to a putative damaged site, the DNA wraps around one UvrB monomer. DNA wrap is dependent on ATP binding by UvrB and probably causes local melting of the DNA helix, facilitating insertion of UvrB beta-hairpin between the DNA strands. Then UvrB probes one DNA strand for the presence of a lesion. If a lesion is found the UvrA subunits dissociate and the UvrB-DNA preincision complex is formed. This complex is subsequently bound by UvrC and the second UvrB is released. If no lesion is found, the DNA wraps around the other UvrB subunit that will check the other stand for damage. In Streptococcus pyogenes serotype M3 (strain ATCC BAA-595 / MGAS315), this protein is UvrABC system protein B.